The following is a 338-amino-acid chain: Stage V sporulation protein AD (338 aa).

This chain is Stage V sporulation protein AD (spoVAD), found in Bacillus subtilis (strain 168).